Reading from the N-terminus, the 940-residue chain is Protein translocase subunit SecA (940 aa).

Residues Gln86, 104–108 (GEGKT), and Asp494 contribute to the ATP site. Positions 884–940 (ATAKAQKDQQAEDAVLVGEDEPETPQGPPARGAFGQPTGASSAPQNREERRKADRRK) are disordered. The span at 929 to 940 (NREERRKADRRK) shows a compositional bias: basic and acidic residues.

It belongs to the SecA family. In terms of assembly, monomer and homodimer. Part of the essential Sec protein translocation apparatus which comprises SecA, SecYEG and auxiliary proteins SecDF. Other proteins may also be involved.

It localises to the cell membrane. Its subcellular location is the cytoplasm. The enzyme catalyses ATP + H2O + cellular proteinSide 1 = ADP + phosphate + cellular proteinSide 2.. Its function is as follows. Part of the Sec protein translocase complex. Interacts with the SecYEG preprotein conducting channel. Has a central role in coupling the hydrolysis of ATP to the transfer of proteins into and across the cell membrane, serving as an ATP-driven molecular motor driving the stepwise translocation of polypeptide chains across the membrane. This chain is Protein translocase subunit SecA, found in Clavibacter sepedonicus (Clavibacter michiganensis subsp. sepedonicus).